The following is a 272-amino-acid chain: Hemin import ATP-binding protein HmuV (272 aa).

Residues 2-255 (LNAEHLHVAR…DLIERCYGFR (254 aa)) form the ABC transporter domain. 34 to 41 (GRNGAGKS) contributes to the ATP binding site.

The protein belongs to the ABC transporter superfamily. Heme (hemin) importer (TC 3.A.1.14.5) family. As to quaternary structure, the complex is composed of two ATP-binding proteins (HmuV), two transmembrane proteins (HmuU) and a solute-binding protein (HmuT).

The protein localises to the cell inner membrane. In terms of biological role, part of the ABC transporter complex HmuTUV involved in hemin import. Responsible for energy coupling to the transport system. This is Hemin import ATP-binding protein HmuV from Burkholderia thailandensis (strain ATCC 700388 / DSM 13276 / CCUG 48851 / CIP 106301 / E264).